Reading from the N-terminus, the 165-residue chain is Ribosome maturation factor RimM (165 aa).

The PRC barrel domain occupies 94 to 163; it reads EDEFYIADLN…KDYVTLNYQR (70 aa).

It belongs to the RimM family. As to quaternary structure, binds ribosomal protein uS19.

It localises to the cytoplasm. Its function is as follows. An accessory protein needed during the final step in the assembly of 30S ribosomal subunit, possibly for assembly of the head region. Essential for efficient processing of 16S rRNA. May be needed both before and after RbfA during the maturation of 16S rRNA. It has affinity for free ribosomal 30S subunits but not for 70S ribosomes. This is Ribosome maturation factor RimM from Rickettsia akari (strain Hartford).